A 523-amino-acid polypeptide reads, in one-letter code: Lysine--tRNA ligase (523 aa).

The short motif at 30–38 is the 'HIGH' region element; sequence PSGYVHVGN. Residues Asp95, Cys99, His100, His106, Cys177, His180, Cys199, and His203 each contribute to the Zn(2+) site. The short motif at 279–283 is the 'KMSKS' region element; it reads KMSGS.

It belongs to the class-I aminoacyl-tRNA synthetase family. Zn(2+) serves as cofactor.

It localises to the cytoplasm. It catalyses the reaction tRNA(Lys) + L-lysine + ATP = L-lysyl-tRNA(Lys) + AMP + diphosphate. The polypeptide is Lysine--tRNA ligase (lysS) (Pyrococcus furiosus (strain ATCC 43587 / DSM 3638 / JCM 8422 / Vc1)).